The following is a 100-amino-acid chain: NAD(P)H-quinone oxidoreductase subunit 4L, chloroplastic (100 aa).

The next 3 helical transmembrane spans lie at 1-21 (MFGH…YGLI), 29-49 (ALMC…TFPN), and 63-83 (VFVI…VLAI).

This sequence belongs to the complex I subunit 4L family. NDH is composed of at least 16 different subunits, 5 of which are encoded in the nucleus.

The protein localises to the plastid. The protein resides in the chloroplast thylakoid membrane. The catalysed reaction is a plastoquinone + NADH + (n+1) H(+)(in) = a plastoquinol + NAD(+) + n H(+)(out). The enzyme catalyses a plastoquinone + NADPH + (n+1) H(+)(in) = a plastoquinol + NADP(+) + n H(+)(out). In terms of biological role, NDH shuttles electrons from NAD(P)H:plastoquinone, via FMN and iron-sulfur (Fe-S) centers, to quinones in the photosynthetic chain and possibly in a chloroplast respiratory chain. The immediate electron acceptor for the enzyme in this species is believed to be plastoquinone. Couples the redox reaction to proton translocation, and thus conserves the redox energy in a proton gradient. This chain is NAD(P)H-quinone oxidoreductase subunit 4L, chloroplastic, found in Huperzia lucidula (Shining clubmoss).